The following is a 206-amino-acid chain: Ribosomal RNA large subunit methyltransferase E (206 aa).

S-adenosyl-L-methionine-binding residues include Gly60, Trp62, Asp80, Asp96, and Asp121. Catalysis depends on Lys161, which acts as the Proton acceptor.

The protein belongs to the class I-like SAM-binding methyltransferase superfamily. RNA methyltransferase RlmE family.

The protein localises to the cytoplasm. The catalysed reaction is uridine(2552) in 23S rRNA + S-adenosyl-L-methionine = 2'-O-methyluridine(2552) in 23S rRNA + S-adenosyl-L-homocysteine + H(+). Specifically methylates the uridine in position 2552 of 23S rRNA at the 2'-O position of the ribose in the fully assembled 50S ribosomal subunit. The polypeptide is Ribosomal RNA large subunit methyltransferase E (Francisella tularensis subsp. novicida (strain U112)).